The primary structure comprises 371 residues: MKILGFMTGTSLDAVDMAVLETDGVEISAFGPAGERKLREATRDLLLKTTDIARAWPRGEPEPVIFEEARRAVADEHFQAAESFLDEHGLSWSDFDLLGVHGQTVLHERPTAQRVGRTVQLLDADRLARLCGRPVAFDFRTADVAVGGEGAPLAPIYHAARARASGLAAPVAALNVGGVANITLIGANGDLLAFDTGPGNGMIDLMLQARGLGRFDEDGRLALAGRVDEAVLAALLDSPYFDAPAPKSLDRYDFSLTPVDHLSAEDAAATLVAFTAEAVFKAFAQSGEAPSALIVCGGGRHNPAIMQTLAARAPVPVKSAEAYGWRGDSIEAEAFAYLAARTAKGLPISFPGTTGVPAPMTGGRIVGLISA.

Residue 9–16 (GTSLDAVD) coordinates ATP.

The protein belongs to the anhydro-N-acetylmuramic acid kinase family.

The catalysed reaction is 1,6-anhydro-N-acetyl-beta-muramate + ATP + H2O = N-acetyl-D-muramate 6-phosphate + ADP + H(+). It functions in the pathway amino-sugar metabolism; 1,6-anhydro-N-acetylmuramate degradation. It participates in cell wall biogenesis; peptidoglycan recycling. Functionally, catalyzes the specific phosphorylation of 1,6-anhydro-N-acetylmuramic acid (anhMurNAc) with the simultaneous cleavage of the 1,6-anhydro ring, generating MurNAc-6-P. Is required for the utilization of anhMurNAc either imported from the medium or derived from its own cell wall murein, and thus plays a role in cell wall recycling. In Caulobacter vibrioides (strain ATCC 19089 / CIP 103742 / CB 15) (Caulobacter crescentus), this protein is Anhydro-N-acetylmuramic acid kinase.